The following is a 172-amino-acid chain: Shikimate kinase (172 aa).

11-16 (GSGKTT) is a binding site for ATP. Threonine 15 is a binding site for Mg(2+). Aspartate 33, arginine 57, and glycine 79 together coordinate substrate. Arginine 117 is a binding site for ATP. Arginine 136 is a substrate binding site.

This sequence belongs to the shikimate kinase family. As to quaternary structure, monomer. The cofactor is Mg(2+).

The protein localises to the cytoplasm. The catalysed reaction is shikimate + ATP = 3-phosphoshikimate + ADP + H(+). It participates in metabolic intermediate biosynthesis; chorismate biosynthesis; chorismate from D-erythrose 4-phosphate and phosphoenolpyruvate: step 5/7. Its function is as follows. Catalyzes the specific phosphorylation of the 3-hydroxyl group of shikimic acid using ATP as a cosubstrate. The sequence is that of Shikimate kinase from Caldicellulosiruptor saccharolyticus (strain ATCC 43494 / DSM 8903 / Tp8T 6331).